The primary structure comprises 122 residues: uncharacterized protein (122 aa).

Positions 1–15 are enriched in basic and acidic residues; sequence MAEPGGRGDYRKDGR. The disordered stretch occupies residues 1–49; sequence MAEPGGRGDYRKDGRLPSLSRSPLSTTLGTSPACGLEIPPTSGARPDGS. Residues 16–32 are compositionally biased toward low complexity; the sequence is LPSLSRSPLSTTLGTSP.

This is an uncharacterized protein from Homo sapiens (Human).